We begin with the raw amino-acid sequence, 237 residues long: UPF0173 metal-dependent hydrolase BOV_A0561 (237 aa).

The protein belongs to the UPF0173 family.

In Brucella ovis (strain ATCC 25840 / 63/290 / NCTC 10512), this protein is UPF0173 metal-dependent hydrolase BOV_A0561.